A 401-amino-acid polypeptide reads, in one-letter code: S-adenosylmethionine synthase (401 aa).

137-142 (GEGSGD) contributes to the ATP binding site. The disordered stretch occupies residues 272–305 (GTSAEQGDDGSVGRGNRSNGLITPNRSMSMEATS). Residues 287–305 (NRSNGLITPNRSMSMEATS) are compositionally biased toward polar residues.

This sequence belongs to the AdoMet synthase 2 family. Mg(2+) serves as cofactor.

It catalyses the reaction L-methionine + ATP + H2O = S-adenosyl-L-methionine + phosphate + diphosphate. The protein operates within amino-acid biosynthesis; S-adenosyl-L-methionine biosynthesis; S-adenosyl-L-methionine from L-methionine: step 1/1. Catalyzes the formation of S-adenosylmethionine from methionine and ATP. In Natronomonas pharaonis (strain ATCC 35678 / DSM 2160 / CIP 103997 / JCM 8858 / NBRC 14720 / NCIMB 2260 / Gabara) (Halobacterium pharaonis), this protein is S-adenosylmethionine synthase.